Reading from the N-terminus, the 404-residue chain is Cysteine desulfurase IscS (404 aa).

Residues 75–76 (AT), Asn-155, Gln-183, and 203–205 (SAH) each bind pyridoxal 5'-phosphate. Lys-206 carries the post-translational modification N6-(pyridoxal phosphate)lysine. Thr-243 contacts pyridoxal 5'-phosphate. Cys-328 (cysteine persulfide intermediate) is an active-site residue. Cys-328 lines the [2Fe-2S] cluster pocket.

It belongs to the class-V pyridoxal-phosphate-dependent aminotransferase family. NifS/IscS subfamily. In terms of assembly, homodimer. Forms a heterotetramer with IscU, interacts with other sulfur acceptors. It depends on pyridoxal 5'-phosphate as a cofactor.

Its subcellular location is the cytoplasm. The catalysed reaction is (sulfur carrier)-H + L-cysteine = (sulfur carrier)-SH + L-alanine. It functions in the pathway cofactor biosynthesis; iron-sulfur cluster biosynthesis. Functionally, master enzyme that delivers sulfur to a number of partners involved in Fe-S cluster assembly, tRNA modification or cofactor biosynthesis. Catalyzes the removal of elemental sulfur atoms from cysteine to produce alanine. Functions as a sulfur delivery protein for Fe-S cluster synthesis onto IscU, an Fe-S scaffold assembly protein, as well as other S acceptor proteins. The sequence is that of Cysteine desulfurase IscS from Pseudomonas putida (strain GB-1).